Here is a 160-residue protein sequence, read N- to C-terminus: NADH-quinone oxidoreductase subunit B (160 aa).

4 residues coordinate [4Fe-4S] cluster: cysteine 37, cysteine 38, cysteine 102, and cysteine 132.

Belongs to the complex I 20 kDa subunit family. NDH-1 is composed of 14 different subunits. Subunits NuoB, C, D, E, F, and G constitute the peripheral sector of the complex. Requires [4Fe-4S] cluster as cofactor.

Its subcellular location is the cell inner membrane. It carries out the reaction a quinone + NADH + 5 H(+)(in) = a quinol + NAD(+) + 4 H(+)(out). NDH-1 shuttles electrons from NADH, via FMN and iron-sulfur (Fe-S) centers, to quinones in the respiratory chain. Couples the redox reaction to proton translocation (for every two electrons transferred, four hydrogen ions are translocated across the cytoplasmic membrane), and thus conserves the redox energy in a proton gradient. The sequence is that of NADH-quinone oxidoreductase subunit B from Neisseria gonorrhoeae (strain NCCP11945).